The sequence spans 388 residues: Processive diacylglycerol beta-glucosyltransferase (388 aa).

It belongs to the glycosyltransferase 28 family. UgtP subfamily.

It localises to the cell membrane. It carries out the reaction a 1,2-diacyl-3-O-(beta-D-glucopyranosyl)-sn-glycerol + UDP-alpha-D-glucose = a 1,2-diacyl-3-O-(beta-D-Glc-(1-&gt;6)-beta-D-Glc)-sn-glycerol + UDP + H(+). The enzyme catalyses a 1,2-diacyl-3-O-(beta-D-Glc-(1-&gt;6)-beta-D-Glc)-sn-glycerol + UDP-alpha-D-glucose = a 1,2-diacyl-3-O-(beta-D-Glc-(1-&gt;6)-beta-D-Glc-(1-&gt;6)-beta-D-Glc)-sn-glycerol + UDP + H(+). The catalysed reaction is a 1,2-diacyl-sn-glycerol + UDP-alpha-D-glucose = a 1,2-diacyl-3-O-(beta-D-glucopyranosyl)-sn-glycerol + UDP + H(+). It functions in the pathway glycolipid metabolism; diglucosyl-diacylglycerol biosynthesis. Processive glucosyltransferase involved in the biosynthesis of both the bilayer- and non-bilayer-forming membrane glucolipids. Is able to successively transfer up to three glucosyl residues to diacylglycerol (DAG), thereby catalyzing the formation of beta-monoglucosyl-DAG (3-O-(beta-D-glucopyranosyl)-1,2-diacyl-sn-glycerol), beta-diglucosyl-DAG (3-O-(beta-D-glucopyranosyl-beta-(1-&gt;6)-D-glucopyranosyl)-1,2-diacyl-sn-glycerol) and beta-triglucosyl-DAG (3-O-(beta-D-glucopyranosyl-beta-(1-&gt;6)-D-glucopyranosyl-beta-(1-&gt;6)-D-glucopyranosyl)-1,2-diacyl-sn-glycerol). Beta-diglucosyl-DAG is the predominant glycolipid found in Bacillales and is also used as a membrane anchor for lipoteichoic acid (LTA). The protein is Processive diacylglycerol beta-glucosyltransferase of Bacillus cereus (strain G9842).